The sequence spans 220 residues: 7-cyano-7-deazaguanine synthase (220 aa).

10–20 serves as a coordination point for ATP; the sequence is FSGGQDSTTCL. Zn(2+)-binding residues include Cys-186, Cys-195, Cys-198, and Cys-201.

Belongs to the QueC family. As to quaternary structure, homodimer. The cofactor is Zn(2+).

It catalyses the reaction 7-carboxy-7-deazaguanine + NH4(+) + ATP = 7-cyano-7-deazaguanine + ADP + phosphate + H2O + H(+). It participates in purine metabolism; 7-cyano-7-deazaguanine biosynthesis. Its function is as follows. Catalyzes the ATP-dependent conversion of 7-carboxy-7-deazaguanine (CDG) to 7-cyano-7-deazaguanine (preQ(0)). In Bacillus thuringiensis (strain Al Hakam), this protein is 7-cyano-7-deazaguanine synthase.